The following is a 3122-amino-acid chain: tRNA nuclease CdiA-2 (3122 aa).

Residues 36–205 (RAGVVPAWLS…ATLTTGNPNF (170 aa)) are two-partner system transport domain (TPS). A helical transmembrane segment spans residues 54 to 74 (VALAVLVAAGVVPIWVNAQVV). The segment at 256–1254 (VVAGSNQVDY…GGSVAIQASG (999 aa)) is FHA-1. Residues 492–512 (GMTLGGGSLSNQGGRANSQGP) form a disordered region. Polar residues predominate over residues 500 to 512 (LSNQGGRANSQGP). Positions 1345 to 1635 (TRRVMQTSGN…SATAVNVLSN (291 aa)) are receptor binding domain (RBD). A periplasmic FHA-1 repeat (pFR) region spans residues 1790-1845 (TAGNIDLKNTQVFTNSGTVKADTTLALQGKQIDNAFGALQSGGLTSLDTTGNVDLT). The FHA-2 stretch occupies residues 1947-2085 (SDTDLNSATG…TERHVYNSRE (139 aa)). Disordered stretches follow at residues 2002–2031 (TSTI…ALTG), 2151–2174 (TTSQ…MSGG), and 2325–2352 (IGVQ…GSSI). The pretoxin (PT) domain stretch occupies residues 2086–2825 (THSRSGVVSG…SAGAAMASNV (740 aa)). Low complexity-rich tracts occupy residues 2151-2170 (TTSQ…HSGL) and 2325-2341 (IGVQ…MQSS). Polar residues predominate over residues 2342–2352 (EDQTIQRGSSI). The segment at 2821–3122 (MASNVELYNA…NITIIKPKGN (302 aa)) is C-terminal effector domain (CT), has tRNA nuclease activity. The ELYN C-terminal motif motif lies at 2826–2829 (ELYN). Residues 2948–3000 (GATDRTPPSNAILSNSNSDNNSTQGSQSGTVTKTPNPEATGSLSGKPTQIPPL) are disordered. The segment at 2948–3122 (GATDRTPPSN…NITIIKPKGN (175 aa)) is truncated CT domain, has tRNA nuclease activity, sufficient for interaction with CdiI-2. Residues 2953-2994 (TPPSNAILSNSNSDNNSTQGSQSGTVTKTPNPEATGSLSGKP) show a composition bias toward polar residues. The segment at 2987–3122 (TGSLSGKPTQ…NITIIKPKGN (136 aa)) is has tRNase activity. Active-site residues include E3012, D3039, D3048, and K3067.

In the N-terminal section; belongs to the CdiA toxin family. Interacts with cognate immunity protein CdiI, which blocks its tRNA nuclease activity. The truncated CT fragment (residues 2948-3122) specifically interacts with cognate CdiI which inhibits the tRNA nuclease activity. The truncated CT is more stable in vitro than the original CT fragment characterized in E.coli.

It localises to the membrane. It is found in the secreted. Its subcellular location is the target cell. The protein localises to the target cell cytoplasm. Functionally, toxic component of a toxin-immunity protein module, which functions as a cellular contact-dependent growth inhibition (CDI) system. CDI modules allow bacteria to communicate with and inhibit the growth of closely related neighboring bacteria in a contact-dependent fashion. The C-terminal 301 residues (the CT fragment) cleaves near the C-terminus of E.coli tRNA1B(Ala), probably preventing tRNA charging, and inhibits growth in E.coli. A truncated CT fragment (residues 2948-3122) has tRNA endonuclease activity on several B.thailandensis tRNAs as well as tRNA2(Arg) where it cleaves after A-70 and U-71. Inactive CT domain binds tRNA, probably in a 1:1 complex. Toxic activity is neutralized by coexpression of the cognate immunity protein CdiI in E.coli, but not by non-cognate immunity proteins from other strains of B.pseudomallei. May use lipopolysaccharide as its target cell receptor. Probably gains access to the cytoplasm of target cells (B.thailandensis strain E264) by using integral inner membrane protein BTH_II0599. Protein BTH_I0359 is also implicated in an unknown fashion in CDI in B.thailandensis strain E264. Its function is as follows. Expression of this cdiAIB locus in B.thailandensis confers protection against other bacteria carrying the locus; growth inhibition requires cellular contact. In terms of biological role, the CdiA protein is thought to be exported from the cell through the central lumen of CdiB, the other half of its two-partner system (TPS). The TPS domain probably remains associated with CdiB while the FHA-1 domain forms an extended filament with the receptor-binding domain (RBD) at its extremity; in the secretion arrested state the C-terminus of the RBD domain form a hairpin-like structure as the FHA-2, PT and CT domains are periplasmic. Upon binding to a target cell outer membrane receptor (possibly a lipoprotein in this CDI) a signal is transmitted to activate secretion. The filament elongates slightly, the rest of CdiA is secreted and the FHA-2 domain becomes stably associated with the target cell's outer membrane where it facilitates entry of the toxic CT domain into the target cell periplasm. From there the toxic CT domain is cleaved and gains access to the target cell cytoplasm via an inner membrane protein (probably inner membrane protein BTH_II0599). The sequence is that of tRNA nuclease CdiA-2 (cdiA2) from Burkholderia pseudomallei (strain 1026b).